Consider the following 525-residue polypeptide: Cysteine--tRNA ligase (525 aa).

Position 49 (C49) interacts with Zn(2+). Positions 51 to 61 (VTVYDLCHLGH) match the 'HIGH' region motif. Zn(2+) contacts are provided by C258, H283, and E287. The 'KMSKS' region motif lies at 315–319 (KMSKS). Position 318 (K318) interacts with ATP.

Belongs to the class-I aminoacyl-tRNA synthetase family. In terms of assembly, monomer. Zn(2+) is required as a cofactor.

The protein localises to the cytoplasm. It catalyses the reaction tRNA(Cys) + L-cysteine + ATP = L-cysteinyl-tRNA(Cys) + AMP + diphosphate. This Synechococcus sp. (strain JA-2-3B'a(2-13)) (Cyanobacteria bacterium Yellowstone B-Prime) protein is Cysteine--tRNA ligase.